Here is a 457-residue protein sequence, read N- to C-terminus: Bifunctional protein GlmU (457 aa).

Residues 1–236 (MDQDACTHSA…DWHFLGVNTP (236 aa)) are pyrophosphorylase. UDP-N-acetyl-alpha-D-glucosamine contacts are provided by residues 14–17 (LAAG), Lys-28, Gln-79, and 84–85 (GT). Asp-110 contacts Mg(2+). Residues Gly-145, Glu-159, Asn-176, and Asn-234 each coordinate UDP-N-acetyl-alpha-D-glucosamine. Asn-234 is a Mg(2+) binding site. Residues 237–257 (KDLSYVESIQQAFIIEKLLQS) are linker. The interval 258-457 (GVIIHSPESV…GKQKNFSKRK (200 aa)) is N-acetyltransferase. UDP-N-acetyl-alpha-D-glucosamine is bound by residues Arg-340 and Lys-358. The active-site Proton acceptor is His-370. 2 residues coordinate UDP-N-acetyl-alpha-D-glucosamine: Tyr-373 and Asn-384. Acetyl-CoA-binding positions include Ala-387, 393–394 (NY), Ser-412, Ala-430, and Arg-447.

The protein in the N-terminal section; belongs to the N-acetylglucosamine-1-phosphate uridyltransferase family. In the C-terminal section; belongs to the transferase hexapeptide repeat family. As to quaternary structure, homotrimer. Requires Mg(2+) as cofactor.

The protein localises to the cytoplasm. It catalyses the reaction alpha-D-glucosamine 1-phosphate + acetyl-CoA = N-acetyl-alpha-D-glucosamine 1-phosphate + CoA + H(+). It carries out the reaction N-acetyl-alpha-D-glucosamine 1-phosphate + UTP + H(+) = UDP-N-acetyl-alpha-D-glucosamine + diphosphate. The protein operates within nucleotide-sugar biosynthesis; UDP-N-acetyl-alpha-D-glucosamine biosynthesis; N-acetyl-alpha-D-glucosamine 1-phosphate from alpha-D-glucosamine 6-phosphate (route II): step 2/2. It functions in the pathway nucleotide-sugar biosynthesis; UDP-N-acetyl-alpha-D-glucosamine biosynthesis; UDP-N-acetyl-alpha-D-glucosamine from N-acetyl-alpha-D-glucosamine 1-phosphate: step 1/1. Its pathway is bacterial outer membrane biogenesis; LPS lipid A biosynthesis. In terms of biological role, catalyzes the last two sequential reactions in the de novo biosynthetic pathway for UDP-N-acetylglucosamine (UDP-GlcNAc). The C-terminal domain catalyzes the transfer of acetyl group from acetyl coenzyme A to glucosamine-1-phosphate (GlcN-1-P) to produce N-acetylglucosamine-1-phosphate (GlcNAc-1-P), which is converted into UDP-GlcNAc by the transfer of uridine 5-monophosphate (from uridine 5-triphosphate), a reaction catalyzed by the N-terminal domain. The polypeptide is Bifunctional protein GlmU (Lawsonia intracellularis (strain PHE/MN1-00)).